Reading from the N-terminus, the 294-residue chain is Large ribosomal subunit protein uL18B (294 aa).

This sequence belongs to the universal ribosomal protein uL18 family. Component of the large ribosomal subunit (LSU). Mature yeast ribosomes consist of a small (40S) and a large (60S) subunit. The 40S small subunit contains 1 molecule of ribosomal RNA (18S rRNA) and 33 different proteins (encoded by 57 genes). The large 60S subunit contains 3 rRNA molecules (25S, 5.8S and 5S rRNA) and 46 different proteins (encoded by 81 genes). Component of a hexameric 5S RNP precursor complex, composed of 5S RNA, rrs1, rpf2, rpl5a/rpl5b, rpl11a/rpl11b and syo1; this complex acts as a precursor for ribosome assembly. rpl5a/rpl5b/uL18 forms a heterotrimeric complex with syo1 and rpl11a/rpl11b/uL5. Interaction of this complex with KAP104 allows the nuclear import of the heterotrimer.

The protein resides in the cytoplasm. It localises to the nucleus. Its function is as follows. Component of the ribosome, a large ribonucleoprotein complex responsible for the synthesis of proteins in the cell. The small ribosomal subunit (SSU) binds messenger RNAs (mRNAs) and translates the encoded message by selecting cognate aminoacyl-transfer RNA (tRNA) molecules. The large subunit (LSU) contains the ribosomal catalytic site termed the peptidyl transferase center (PTC), which catalyzes the formation of peptide bonds, thereby polymerizing the amino acids delivered by tRNAs into a polypeptide chain. The nascent polypeptides leave the ribosome through a tunnel in the LSU and interact with protein factors that function in enzymatic processing, targeting, and the membrane insertion of nascent chains at the exit of the ribosomal tunnel. In Schizosaccharomyces pombe (strain 972 / ATCC 24843) (Fission yeast), this protein is Large ribosomal subunit protein uL18B (rpl502).